A 136-amino-acid polypeptide reads, in one-letter code: UPF0275 protein PM0493 (136 aa).

Belongs to the UPF0275 family.

The chain is UPF0275 protein PM0493 from Pasteurella multocida (strain Pm70).